A 223-amino-acid polypeptide reads, in one-letter code: Probable Brix domain-containing ribosomal biogenesis protein (223 aa).

The region spanning 1–196 is the Brix domain; sequence MMLITTSHRP…IWIMEDGRRW (196 aa).

Its function is as follows. Probably involved in the biogenesis of the ribosome. This is Probable Brix domain-containing ribosomal biogenesis protein from Pyrococcus furiosus (strain ATCC 43587 / DSM 3638 / JCM 8422 / Vc1).